Reading from the N-terminus, the 443-residue chain is Xaa-Pro dipeptidase (443 aa).

Mn(2+) contacts are provided by Asp246, Asp257, His339, Glu384, and Glu423.

Belongs to the peptidase M24B family. Bacterial-type prolidase subfamily. The cofactor is Mn(2+).

The catalysed reaction is Xaa-L-Pro dipeptide + H2O = an L-alpha-amino acid + L-proline. In terms of biological role, splits dipeptides with a prolyl residue in the C-terminal position. The sequence is that of Xaa-Pro dipeptidase from Salmonella arizonae (strain ATCC BAA-731 / CDC346-86 / RSK2980).